Here is a 278-residue protein sequence, read N- to C-terminus: Phosphatidylglycerol--prolipoprotein diacylglyceryl transferase (278 aa).

3 consecutive transmembrane segments (helical) span residues 13-33 (LFGI…ALAV), 50-70 (VFDF…LYYV), and 89-109 (NGGL…FFFT). Residue R135 coordinates a 1,2-diacyl-sn-glycero-3-phospho-(1'-sn-glycerol). Transmembrane regions (helical) follow at residues 175 to 195 (QPTF…LVLL), 205 to 225 (GEVF…IEGL), and 236 to 256 (IRVS…IVIV).

The protein belongs to the Lgt family.

It is found in the cell membrane. It catalyses the reaction L-cysteinyl-[prolipoprotein] + a 1,2-diacyl-sn-glycero-3-phospho-(1'-sn-glycerol) = an S-1,2-diacyl-sn-glyceryl-L-cysteinyl-[prolipoprotein] + sn-glycerol 1-phosphate + H(+). Its pathway is protein modification; lipoprotein biosynthesis (diacylglyceryl transfer). Catalyzes the transfer of the diacylglyceryl group from phosphatidylglycerol to the sulfhydryl group of the N-terminal cysteine of a prolipoprotein, the first step in the formation of mature lipoproteins. This Enterococcus faecalis (strain ATCC 700802 / V583) protein is Phosphatidylglycerol--prolipoprotein diacylglyceryl transferase.